A 396-amino-acid chain; its full sequence is Acetate kinase (396 aa).

Residue asparagine 7 participates in Mg(2+) binding. Position 14 (lysine 14) interacts with ATP. Arginine 88 is a substrate binding site. The active-site Proton donor/acceptor is aspartate 145. ATP-binding positions include 205–209, 279–281, and 327–331; these read HLGNG, DFR, and GIGEN. Glutamate 381 serves as a coordination point for Mg(2+).

Belongs to the acetokinase family. As to quaternary structure, homodimer. Requires Mg(2+) as cofactor. Mn(2+) serves as cofactor.

The protein resides in the cytoplasm. The enzyme catalyses acetate + ATP = acetyl phosphate + ADP. It participates in metabolic intermediate biosynthesis; acetyl-CoA biosynthesis; acetyl-CoA from acetate: step 1/2. Its function is as follows. Catalyzes the formation of acetyl phosphate from acetate and ATP. Can also catalyze the reverse reaction. The protein is Acetate kinase of Campylobacter jejuni (strain RM1221).